The sequence spans 292 residues: Ribosomal protein L11 methyltransferase (292 aa).

Residues T145, G166, D188, and N229 each contribute to the S-adenosyl-L-methionine site.

Belongs to the methyltransferase superfamily. PrmA family.

It is found in the cytoplasm. It carries out the reaction L-lysyl-[protein] + 3 S-adenosyl-L-methionine = N(6),N(6),N(6)-trimethyl-L-lysyl-[protein] + 3 S-adenosyl-L-homocysteine + 3 H(+). Its function is as follows. Methylates ribosomal protein L11. The chain is Ribosomal protein L11 methyltransferase from Pseudoalteromonas atlantica (strain T6c / ATCC BAA-1087).